An 807-amino-acid chain; its full sequence is Ribosome-releasing factor 2, mitochondrial (807 aa).

The N-terminal 18 residues, 1–18 (MFCRKYVFQTWKQLSRSY), are a transit peptide targeting the mitochondrion. One can recognise a tr-type G domain in the interval 27–315 (AKTRNIGIIA…GITKYLPSPL (289 aa)). GTP contacts are provided by residues 36–43 (AHIDAGKT), 100–104 (DTPGH), and 154–157 (NKMD).

This sequence belongs to the TRAFAC class translation factor GTPase superfamily. Classic translation factor GTPase family. EF-G/EF-2 subfamily.

The protein localises to the mitochondrion. In terms of biological role, mitochondrial GTPase that mediates the disassembly of ribosomes from messenger RNA at the termination of mitochondrial protein biosynthesis. Not involved in the GTP-dependent ribosomal translocation step during translation elongation. In Candida albicans (strain SC5314 / ATCC MYA-2876) (Yeast), this protein is Ribosome-releasing factor 2, mitochondrial.